The chain runs to 70 residues: Large ribosomal subunit protein bL31 (70 aa).

Belongs to the bacterial ribosomal protein bL31 family. Type A subfamily. As to quaternary structure, part of the 50S ribosomal subunit.

Functionally, binds the 23S rRNA. This chain is Large ribosomal subunit protein bL31, found in Mycoplasma mobile (strain ATCC 43663 / 163K / NCTC 11711) (Mesomycoplasma mobile).